A 720-amino-acid polypeptide reads, in one-letter code: Polyribonucleotide nucleotidyltransferase (720 aa).

The Mg(2+) site is built by Asp-484 and Asp-490. Residues Pro-551 to Ile-610 enclose the KH domain. Positions Gly-620–Arg-688 constitute an S1 motif domain. The interval Pro-697 to Ser-720 is disordered.

The protein belongs to the polyribonucleotide nucleotidyltransferase family. Mg(2+) is required as a cofactor.

The protein resides in the cytoplasm. It catalyses the reaction RNA(n+1) + phosphate = RNA(n) + a ribonucleoside 5'-diphosphate. Involved in mRNA degradation. Catalyzes the phosphorolysis of single-stranded polyribonucleotides processively in the 3'- to 5'-direction. This is Polyribonucleotide nucleotidyltransferase from Dehalococcoides mccartyi (strain CBDB1).